Reading from the N-terminus, the 81-residue chain is MQSLEIVAIVELVVAAIIAIVVWTIVFIEYRKILRQRKIDRLIDRIREREEDNGNESEGDQEELSALVEMGHHAPWNVDDL.

The Extracellular segment spans residues 1–7 (MQSLEIV). Residues 8-28 (AIVELVVAAIIAIVVWTIVFI) form a helical membrane-spanning segment. Residues 29–81 (EYRKILRQRKIDRLIDRIREREEDNGNESEGDQEELSALVEMGHHAPWNVDDL) are Cytoplasmic-facing. Positions 50-81 (EEDNGNESEGDQEELSALVEMGHHAPWNVDDL) are disordered. Residues 53–63 (NGNESEGDQEE) are compositionally biased toward acidic residues. Position 57 is a phosphoserine; by host CK2 (serine 57).

The protein belongs to the HIV-1 VPU protein family. As to quaternary structure, homopentamer. Interacts with host CD4 and BRTC; these interactions induce proteasomal degradation of CD4. Interacts with host BST2; this interaction leads to the degradation of host BST2. Interacts with host FBXW11. Interacts with host AP1M1; this interaction plays a role in the mistrafficking and subsequent degradation of host BST2. Interacts with host RANBP2; this interaction allows Vpu to down-regulate host BLM sumoylation. In terms of processing, phosphorylated by host CK2. This phosphorylation is necessary for interaction with human BTRC and degradation of CD4.

The protein resides in the host membrane. Its activity is regulated as follows. Ion channel activity is inhibited by hexamethylene amiloride in vitro. Functionally, enhances virion budding by targeting host CD4 and Tetherin/BST2 to proteasome degradation. Degradation of CD4 prevents any unwanted premature interactions between viral Env and its host receptor CD4 in the endoplasmic reticulum. Degradation of antiretroviral protein Tetherin/BST2 is important for virion budding, as BST2 tethers new viral particles to the host cell membrane. Mechanistically, Vpu bridges either CD4 or BST2 to BTRC, a substrate recognition subunit of the Skp1/Cullin/F-box protein E3 ubiquitin ligase, induces their ubiquitination and subsequent proteasomal degradation. The alteration of the E3 ligase specificity by Vpu seems to promote the degradation of host IKBKB, leading to NF-kappa-B down-regulation and subsequent apoptosis. Acts as a viroporin that forms an oligomeric ion channel in membranes. Modulates the host DNA repair mechanisms to promote degradation of nuclear viral cDNA in cells that are already productively infected in order to suppress immune sensing and proviral hyper-integration (superinfection). Manipulates PML-NBs and modulates SUMOylation of host BLM protein thereby enhancing its DNA-end processing activity toward viral unintegrated linear DNA. Also inhibits RAD52-mediated homologous repair of viral cDNA, preventing the generation of dead-end circular forms of single copies of the long terminal repeat and permitting sustained nucleolytic attack. The sequence is that of Protein Vpu from Homo sapiens (Human).